Reading from the N-terminus, the 305-residue chain is tRNA dimethylallyltransferase (305 aa).

8 to 15 is a binding site for ATP; that stretch reads GPTAIGKS. 10–15 lines the substrate pocket; that stretch reads TAIGKS. The interaction with substrate tRNA stretch occupies residues 33-36; sequence DSMA.

Belongs to the IPP transferase family. Monomer. Requires Mg(2+) as cofactor.

It catalyses the reaction adenosine(37) in tRNA + dimethylallyl diphosphate = N(6)-dimethylallyladenosine(37) in tRNA + diphosphate. In terms of biological role, catalyzes the transfer of a dimethylallyl group onto the adenine at position 37 in tRNAs that read codons beginning with uridine, leading to the formation of N6-(dimethylallyl)adenosine (i(6)A). In Aquifex aeolicus (strain VF5), this protein is tRNA dimethylallyltransferase.